Consider the following 667-residue polypeptide: Leucine zipper putative tumor suppressor 2 (667 aa).

Positions 1-25 (MAIVQTLPVPLEPAPEAATAQQAPA) are enriched in low complexity. 3 disordered regions span residues 1-132 (MAIV…PVSG), 150-325 (PVLP…DEAL), and 516-541 (QEAE…PPVP). The required for centrosomal localization stretch occupies residues 1-333 (MAIVQTLPVP…ALLHCVLEGK (333 aa)). Polar residues predominate over residues 172–181 (PSGSQGSLTQ). Over residues 187–198 (ASSSSSSSSSAA) the composition is skewed to low complexity. Positions 212–232 (PSGTLSDSGRNSLSSLPTYST) are enriched in polar residues. Low complexity predominate over residues 241–282 (SPGGHLPSHGPGRGALPGPARGAPTGPSHSDSGRSSSSKSTG). Residue serine 248 is modified to Phosphoserine. A compositionally biased stretch (gly residues) spans 283-294 (SLGGRLAGGLLG). Serine 295 bears the Phosphoserine mark. Pro residues predominate over residues 310-321 (SPPPPPPPPPPS). Residues 329-647 (VLEGKLRDRE…LELEARELAD (319 aa)) adopt a coiled-coil conformation. The interval 445–667 (SGEISLLKQQ…CLEEITATEI (223 aa)) is sufficient for interaction with CTNNB1. The segment at 448–667 (ISLLKQQLKE…CLEEITATEI (220 aa)) is sufficient for interaction with KATNB1 and for inhibition of katanin-mediated microtubule severing. The segment covering 516–526 (QEAERLREKAG) has biased composition (basic and acidic residues). Serine 568 is subject to Phosphoserine. A Nuclear export signal motif is present at residues 629 to 638 (LEQELQQLSL).

It belongs to the LZTS2 family. Interacts with KATNB1. Also interacts with CTNNB1, gamma-tubulin and KIF23.

It localises to the cytoplasm. Its subcellular location is the cytoskeleton. The protein localises to the microtubule organizing center. The protein resides in the centrosome. Functionally, negative regulator of katanin-mediated microtubule severing and release from the centrosome. Required for central spindle formation and the completion of cytokinesis. May negatively regulate axonal outgrowth by preventing the formation of microtubule bundles that are necessary for transport within the elongating axon. Negative regulator of the Wnt signaling pathway. Represses beta-catenin-mediated transcriptional activation by promoting the nuclear exclusion of beta-catenin. The protein is Leucine zipper putative tumor suppressor 2 of Bos taurus (Bovine).